The primary structure comprises 88 residues: Small ribosomal subunit protein bS20 (88 aa).

A disordered region spans residues 1–27 (MANSKSAKKRALQSEKRRQHNASRRSM).

This sequence belongs to the bacterial ribosomal protein bS20 family.

Its function is as follows. Binds directly to 16S ribosomal RNA. This Shewanella sp. (strain ANA-3) protein is Small ribosomal subunit protein bS20.